A 290-amino-acid polypeptide reads, in one-letter code: 4-hydroxy-tetrahydrodipicolinate synthase (290 aa).

A pyruvate-binding site is contributed by threonine 44. Residue tyrosine 131 is the Proton donor/acceptor of the active site. Catalysis depends on lysine 159, which acts as the Schiff-base intermediate with substrate. Residue isoleucine 201 participates in pyruvate binding.

This sequence belongs to the DapA family. In terms of assembly, homotetramer; dimer of dimers.

It localises to the cytoplasm. The catalysed reaction is L-aspartate 4-semialdehyde + pyruvate = (2S,4S)-4-hydroxy-2,3,4,5-tetrahydrodipicolinate + H2O + H(+). Its pathway is amino-acid biosynthesis; L-lysine biosynthesis via DAP pathway; (S)-tetrahydrodipicolinate from L-aspartate: step 3/4. Its function is as follows. Catalyzes the condensation of (S)-aspartate-beta-semialdehyde [(S)-ASA] and pyruvate to 4-hydroxy-tetrahydrodipicolinate (HTPA). This Jannaschia sp. (strain CCS1) protein is 4-hydroxy-tetrahydrodipicolinate synthase.